Reading from the N-terminus, the 35-residue chain is Photosystem II reaction center protein T (35 aa).

A helical membrane pass occupies residues 3-23 (ALVYTFLLVSTLGIIFFAIFF).

It belongs to the PsbT family. PSII is composed of 1 copy each of membrane proteins PsbA, PsbB, PsbC, PsbD, PsbE, PsbF, PsbH, PsbI, PsbJ, PsbK, PsbL, PsbM, PsbT, PsbY, PsbZ, Psb30/Ycf12, at least 3 peripheral proteins of the oxygen-evolving complex and a large number of cofactors. It forms dimeric complexes.

The protein resides in the plastid. It localises to the chloroplast thylakoid membrane. In terms of biological role, found at the monomer-monomer interface of the photosystem II (PS II) dimer, plays a role in assembly and dimerization of PSII. PSII is a light-driven water plastoquinone oxidoreductase, using light energy to abstract electrons from H(2)O, generating a proton gradient subsequently used for ATP formation. This Drimys granadensis protein is Photosystem II reaction center protein T.